The sequence spans 216 residues: Somatotropin (216 aa).

A signal peptide spans 1-26 (MAASPRNSVLLAFALLCLPWPQEVGA). Histidine 45 contributes to the Zn(2+) binding site. Residues cysteine 78 and cysteine 189 are joined by a disulfide bond. Serine 131 bears the Phosphoserine mark. Glutamate 198 contacts Zn(2+). The cysteines at positions 206 and 214 are disulfide-linked.

It belongs to the somatotropin/prolactin family.

The protein resides in the secreted. In terms of biological role, plays an important role in growth control. Its major role in stimulating body growth is to stimulate the liver and other tissues to secrete IGF1. It stimulates both the differentiation and proliferation of myoblasts. It also stimulates amino acid uptake and protein synthesis in muscle and other tissues. This Canis lupus familiaris (Dog) protein is Somatotropin (GH1).